Here is a 64-residue protein sequence, read N- to C-terminus: uncharacterized protein (64 aa).

To P.abyssi PAB3148.

This is an uncharacterized protein from Archaeoglobus fulgidus (strain ATCC 49558 / DSM 4304 / JCM 9628 / NBRC 100126 / VC-16).